Reading from the N-terminus, the 304-residue chain is Probable porphobilinogen deaminase (304 aa).

An S-(dipyrrolylmethanemethyl)cysteine modification is found at C240.

This sequence belongs to the HMBS family. Requires dipyrromethane as cofactor.

It carries out the reaction 4 porphobilinogen + H2O = hydroxymethylbilane + 4 NH4(+). It participates in porphyrin-containing compound metabolism; protoporphyrin-IX biosynthesis; coproporphyrinogen-III from 5-aminolevulinate: step 2/4. Tetrapolymerization of the monopyrrole PBG into the hydroxymethylbilane pre-uroporphyrinogen in several discrete steps. This chain is Probable porphobilinogen deaminase, found in Ignicoccus hospitalis (strain KIN4/I / DSM 18386 / JCM 14125).